The primary structure comprises 239 residues: Skn-1 dependent zygotic transcript 1 protein (239 aa).

Expressed in mesendodermal precursor cells of embryos.

Its function is as follows. May have a role in mesendoderm development during embryogenesis. This Caenorhabditis elegans protein is Skn-1 dependent zygotic transcript 1 protein (sdz-1).